Here is a 221-residue protein sequence, read N- to C-terminus: Immunoregulatory peptides (221 aa).

A signal peptide spans 1–19; that stretch reads MNYLCLVVTLVAVAGAISG. Residues 20-45 constitute a propeptide that is removed on maturation; sequence EKFSDDNTGYQSTPSLRIRTTPGRRR. Residues 21-155 are disordered; it reads KFSDDNTGYQ…PRTIGPPYTR (135 aa). Residues 25–34 are compositionally biased toward polar residues; the sequence is DNTGYQSTPS. The span at 48 to 69 shows a compositional bias: low complexity; the sequence is PRTIGPPYTRRTLRTTTDYSTT. Polar residues-rich tracts occupy residues 70–85 and 123–133; these read VENGNLTTPAANSTEK and NGTTPAANSTE. The propeptide occupies 191–221; it reads EISWTFGPLYTWRTTKGYGTTLETTNATSTS.

As to expression, salivary glands.

Its subcellular location is the secreted. Functionally, suppress host inflammatory response. Exerts significant anti-inflammatory functions, either by directly inhibiting host secretion of inflammatory factors such as tumor necrosis factor-alpha (TNF), monocyte chemotactic protein-1 (CCL2), and interferon-gamma (IFNG) or by indirectly increasing the secretion of immunosuppressant cytokine of interleukin-10 (IL10). Also potently scavenges free radical in vitro in a rapid manner. All tested concentrations of this peptide have little effect on the cell viability. In vivo, inhibits hind paw adjuvant-induced inflammation in mouse in a dose-dependent manner. Its function is as follows. Suppress host inflammatory response. Exerts significant anti-inflammatory functions, either by directly inhibiting host secretion of inflammatory factors such as tumor necrosis factor-alpha (TNF), monocyte chemotactic protein-1 (CCL2), and interferon-gamma (IFNG) or by indirectly increasing the secretion of immunosuppressant cytokine of interleukin-10 (IL10). Also potently scavenges free radical in vitro in a rapid manner. Low concentrations of this peptide have little effect on the cell viability, whereas high concentrations increase the cell viability by 10-20%. In vivo, inhibits hind paw adjuvant-induced inflammation in mouse in a dose-dependent manner. In terms of biological role, not studied but probably similar to Hyalomin-B1. The polypeptide is Immunoregulatory peptides (Hyalomma asiaticum asiaticum (Tick)).